Consider the following 102-residue polypeptide: Small ribosomal subunit protein uS10 (102 aa).

This sequence belongs to the universal ribosomal protein uS10 family. Part of the 30S ribosomal subunit.

In terms of biological role, involved in the binding of tRNA to the ribosomes. The chain is Small ribosomal subunit protein uS10 from Methanocorpusculum labreanum (strain ATCC 43576 / DSM 4855 / Z).